Consider the following 305-residue polypeptide: Sulfate adenylyltransferase subunit 2 (305 aa).

The protein belongs to the PAPS reductase family. CysD subfamily. As to quaternary structure, heterodimer composed of CysD, the smaller subunit, and CysN.

It carries out the reaction sulfate + ATP + H(+) = adenosine 5'-phosphosulfate + diphosphate. The protein operates within sulfur metabolism; hydrogen sulfide biosynthesis; sulfite from sulfate: step 1/3. Functionally, with CysN forms the ATP sulfurylase (ATPS) that catalyzes the adenylation of sulfate producing adenosine 5'-phosphosulfate (APS) and diphosphate, the first enzymatic step in sulfur assimilation pathway. APS synthesis involves the formation of a high-energy phosphoric-sulfuric acid anhydride bond driven by GTP hydrolysis by CysN coupled to ATP hydrolysis by CysD. The sequence is that of Sulfate adenylyltransferase subunit 2 from Pseudomonas entomophila (strain L48).